The following is a 353-amino-acid chain: Vomeronasal type-1 receptor 1 (353 aa).

The Extracellular portion of the chain corresponds to methionine 1–threonine 56. A helical membrane pass occupies residues glycine 57–glycine 77. Residues histidine 78–aspartate 84 lie on the Cytoplasmic side of the membrane. Residues leucine 85 to glutamine 105 traverse the membrane as a helical segment. The Extracellular segment spans residues threonine 106–threonine 132. Asparagine 117 is a glycosylation site (N-linked (GlcNAc...) asparagine). Residues arginine 133–serine 153 form a helical membrane-spanning segment. At isoleucine 154–aspartate 169 the chain is on the cytoplasmic side. The chain crosses the membrane as a helical span at residues phenylalanine 170–valine 190. Topologically, residues asparagine 191 to serine 226 are extracellular. N-linked (GlcNAc...) asparagine glycosylation occurs at asparagine 198. Residues proline 227–tyrosine 247 form a helical membrane-spanning segment. At arginine 248–threonine 274 the chain is on the cytoplasmic side. Residues isoleucine 275–tryptophan 295 traverse the membrane as a helical segment. Over threonine 296–glycine 303 the chain is Extracellular. A helical membrane pass occupies residues glutamine 304–valine 324. Topologically, residues leucine 325–proline 353 are cytoplasmic.

This sequence belongs to the G-protein coupled receptor 1 family. In terms of tissue distribution, expressed in the olfactory mucosa, very low expression in brain, lung and kidney.

The protein resides in the cell membrane. Its function is as follows. Putative pheromone receptor. This is Vomeronasal type-1 receptor 1 (VN1R1) from Homo sapiens (Human).